Consider the following 317-residue polypeptide: MPHTLPETELHNPQSTKPPLDPHLKALENEAIHIFREVAAEFERPVMLYSIGKDSSVLLHLARKAFYPGRIPFPLLHVDTGWKFREMIAFRDEMVAKYDLDLVAHTNPRGAAENVTPFTHGSALYTDIMKTEALRQALDAGQYDAAFGGARRDEEASRAKERIYSFRTPDHRWDPRNQRPELWNVYNGMIRKGESVRAFPLSNWTEVDIWRYIQAEDIPIVPLYFAKKRPVVERDGMLILAEDPRLELLPGEVKREEVIRFRTLGCFPLTGAIRSEADTLDDIIAELETATVSERQGRAIDRDQAGSMEKKKREGYF.

Residues 1–10 (MPHTLPETEL) show a composition bias toward basic and acidic residues. Disordered regions lie at residues 1–21 (MPHT…PPLD) and 295–317 (RQGR…EGYF).

Belongs to the PAPS reductase family. CysD subfamily. Heterodimer composed of CysD, the smaller subunit, and CysN.

It carries out the reaction sulfate + ATP + H(+) = adenosine 5'-phosphosulfate + diphosphate. It functions in the pathway sulfur metabolism; hydrogen sulfide biosynthesis; sulfite from sulfate: step 1/3. Functionally, with CysN forms the ATP sulfurylase (ATPS) that catalyzes the adenylation of sulfate producing adenosine 5'-phosphosulfate (APS) and diphosphate, the first enzymatic step in sulfur assimilation pathway. APS synthesis involves the formation of a high-energy phosphoric-sulfuric acid anhydride bond driven by GTP hydrolysis by CysN coupled to ATP hydrolysis by CysD. In Rhizobium meliloti (strain 1021) (Ensifer meliloti), this protein is Sulfate adenylyltransferase subunit 2 (cysD).